Reading from the N-terminus, the 90-residue chain is Small ribosomal subunit protein bS16 (90 aa).

Belongs to the bacterial ribosomal protein bS16 family.

In Bacillus anthracis (strain A0248), this protein is Small ribosomal subunit protein bS16.